The sequence spans 232 residues: Thrombin-like enzyme bothrombin (232 aa).

The Peptidase S1 domain occupies 1–223 (VIGGDECDIN…YLPWIQSIIA (223 aa)). Disulfide bonds link Cys-7–Cys-139, Cys-26–Cys-42, Cys-74–Cys-230, Cys-118–Cys-184, Cys-150–Cys-163, and Cys-174–Cys-199. Active-site charge relay system residues include His-41 and Asp-86. Asn-98 and Asn-146 each carry an N-linked (GlcNAc...) asparagine glycan. Catalysis depends on Ser-178, which acts as the Charge relay system. A glycan (N-linked (GlcNAc...) asparagine) is linked at Asn-225.

It belongs to the peptidase S1 family. Snake venom subfamily. In terms of assembly, monomer. Expressed by the venom gland.

It is found in the secreted. The catalysed reaction is Selective cleavage of Arg-|-Xaa bond in fibrinogen, to form fibrin, and release fibrinopeptide A. The specificity of further degradation of fibrinogen varies with species origin of the enzyme.. Inhibited by diisopropylfluorophosphate (DFP), but not by hirudin. Functionally, thrombin-like snake venom serine protease that clots fibrinogen by releasing fibrinopeptide A from the alpha chain of fibrinogen (FGA), induces platelet aggregation through its interaction with GPIb (GP1BA/GP1BB), and activates factor VIII (F8). The protein is Thrombin-like enzyme bothrombin of Bothrops jararaca (Jararaca).